The sequence spans 637 residues: Phosphomethylpyrimidine synthase (637 aa).

Substrate contacts are provided by residues Asn-242, Met-271, Tyr-300, His-336, 356-358 (SRG), 397-400 (DGLR), and Glu-436. Residue His-440 coordinates Zn(2+). A substrate-binding site is contributed by Tyr-463. His-504 is a Zn(2+) binding site. [4Fe-4S] cluster is bound by residues Cys-584, Cys-587, and Cys-592.

It belongs to the ThiC family. In terms of assembly, homodimer. It depends on [4Fe-4S] cluster as a cofactor.

The catalysed reaction is 5-amino-1-(5-phospho-beta-D-ribosyl)imidazole + S-adenosyl-L-methionine = 4-amino-2-methyl-5-(phosphooxymethyl)pyrimidine + CO + 5'-deoxyadenosine + formate + L-methionine + 3 H(+). It participates in cofactor biosynthesis; thiamine diphosphate biosynthesis. Functionally, catalyzes the synthesis of the hydroxymethylpyrimidine phosphate (HMP-P) moiety of thiamine from aminoimidazole ribotide (AIR) in a radical S-adenosyl-L-methionine (SAM)-dependent reaction. This Bordetella bronchiseptica (strain ATCC BAA-588 / NCTC 13252 / RB50) (Alcaligenes bronchisepticus) protein is Phosphomethylpyrimidine synthase.